The following is a 242-amino-acid chain: 1-(5-phosphoribosyl)-5-[(5-phosphoribosylamino)methylideneamino] imidazole-4-carboxamide isomerase (242 aa).

The active-site Proton acceptor is D10. Residue D132 is the Proton donor of the active site.

Belongs to the HisA/HisF family.

It is found in the cytoplasm. The catalysed reaction is 1-(5-phospho-beta-D-ribosyl)-5-[(5-phospho-beta-D-ribosylamino)methylideneamino]imidazole-4-carboxamide = 5-[(5-phospho-1-deoxy-D-ribulos-1-ylimino)methylamino]-1-(5-phospho-beta-D-ribosyl)imidazole-4-carboxamide. The protein operates within amino-acid biosynthesis; L-histidine biosynthesis; L-histidine from 5-phospho-alpha-D-ribose 1-diphosphate: step 4/9. The protein is 1-(5-phosphoribosyl)-5-[(5-phosphoribosylamino)methylideneamino] imidazole-4-carboxamide isomerase of Methanopyrus kandleri (strain AV19 / DSM 6324 / JCM 9639 / NBRC 100938).